The following is a 215-amino-acid chain: Transmembrane protein 267 (215 aa).

3 helical membrane-spanning segments follow: residues 77-97 (FGEIILAGFLASVIDIDHFLL), 114-134 (FLHCSTVIPTVVLTLKFTMHF), and 178-198 (FWLYVIITSSLPHICSFVMYF).

The protein resides in the membrane. The polypeptide is Transmembrane protein 267 (TMEM267) (Bos taurus (Bovine)).